The primary structure comprises 237 residues: Ribosomal RNA small subunit methyltransferase G (237 aa).

Residues glycine 78, phenylalanine 83, 129 to 130 (AE), and arginine 148 contribute to the S-adenosyl-L-methionine site.

The protein belongs to the methyltransferase superfamily. RNA methyltransferase RsmG family.

Its subcellular location is the cytoplasm. Its function is as follows. Specifically methylates the N7 position of a guanine in 16S rRNA. This Streptococcus pyogenes serotype M3 (strain ATCC BAA-595 / MGAS315) protein is Ribosomal RNA small subunit methyltransferase G.